Consider the following 349-residue polypeptide: Isopentenyl-diphosphate delta-isomerase (349 aa).

Residue 6-7 coordinates substrate; that stretch reads RK. FMN contacts are provided by residues 62 to 64, Ser93, and Asn122; that span reads AMT. Residue Gln152 participates in substrate binding. Glu153 serves as a coordination point for Mg(2+). Residues Lys184, Thr214, 258–259, and 280–281 each bind FMN; these read GG and AG.

It belongs to the IPP isomerase type 2 family. As to quaternary structure, homooctamer. Dimer of tetramers. It depends on FMN as a cofactor. NADPH serves as cofactor. The cofactor is Mg(2+).

The protein resides in the cytoplasm. It catalyses the reaction isopentenyl diphosphate = dimethylallyl diphosphate. Involved in the biosynthesis of isoprenoids. Catalyzes the 1,3-allylic rearrangement of the homoallylic substrate isopentenyl (IPP) to its allylic isomer, dimethylallyl diphosphate (DMAPP). In Bacillus mycoides (strain KBAB4) (Bacillus weihenstephanensis), this protein is Isopentenyl-diphosphate delta-isomerase.